We begin with the raw amino-acid sequence, 261 residues long: Indole-3-glycerol phosphate synthase (261 aa).

Belongs to the TrpC family.

It catalyses the reaction 1-(2-carboxyphenylamino)-1-deoxy-D-ribulose 5-phosphate + H(+) = (1S,2R)-1-C-(indol-3-yl)glycerol 3-phosphate + CO2 + H2O. It functions in the pathway amino-acid biosynthesis; L-tryptophan biosynthesis; L-tryptophan from chorismate: step 4/5. This Burkholderia mallei (strain NCTC 10247) protein is Indole-3-glycerol phosphate synthase.